The primary structure comprises 525 residues: Cysteine--tRNA ligase (525 aa).

Cys-49 contributes to the Zn(2+) binding site. A 'HIGH' region motif is present at residues 51–61; that stretch reads VTVYDLCHLGH. Residues Cys-258, His-283, and Glu-287 each contribute to the Zn(2+) site. Residues 315-319 carry the 'KMSKS' region motif; it reads KMSKS. ATP is bound at residue Lys-318.

Belongs to the class-I aminoacyl-tRNA synthetase family. As to quaternary structure, monomer. Requires Zn(2+) as cofactor.

The protein resides in the cytoplasm. The enzyme catalyses tRNA(Cys) + L-cysteine + ATP = L-cysteinyl-tRNA(Cys) + AMP + diphosphate. In Synechococcus sp. (strain JA-2-3B'a(2-13)) (Cyanobacteria bacterium Yellowstone B-Prime), this protein is Cysteine--tRNA ligase.